Here is a 64-residue protein sequence, read N- to C-terminus: UPF0434 protein Bmul_0750/BMULJ_02510 (64 aa).

The protein belongs to the UPF0434 family.

This Burkholderia multivorans (strain ATCC 17616 / 249) protein is UPF0434 protein Bmul_0750/BMULJ_02510.